The chain runs to 621 residues: NADPH-dependent diflavin oxidoreductase 1 (621 aa).

Residues 6 to 168 enclose the Flavodoxin-like domain; that stretch reads IAVLYGSETG…VYFEFEKRII (163 aa). FMN-binding positions include 12 to 17, 59 to 62, 106 to 115, and Glu142; these read SETGNA, STTG, and LGDSSYPKFN. The region spanning 224–489 is the FAD-binding FR-type domain; that stretch reads KLIKTGTITL…VGPGVGLAPL (266 aa). FAD-binding positions include Arg381, 411 to 414, and 443 to 446; these read RLYS and GVCT. Residues 536-537 and 545-549 each bind NADP(+); these read SR and TKYVQ. Trp621 is a binding site for FAD.

It belongs to the NADPH-dependent diflavin oxidoreductase NDOR1 family. This sequence in the N-terminal section; belongs to the flavodoxin family. The protein in the C-terminal section; belongs to the flavoprotein pyridine nucleotide cytochrome reductase family. As to quaternary structure, interacts with DRE2; as part of the cytosolic iron-sulfur (Fe-S) protein assembly (CIA) machinery. Requires FAD as cofactor. FMN is required as a cofactor.

It localises to the cytoplasm. The protein resides in the mitochondrion. The enzyme catalyses 2 oxidized [2Fe-2S]-[protein] + NADPH = 2 reduced [2Fe-2S]-[protein] + NADP(+) + H(+). Its function is as follows. NADPH-dependent reductase which is a central component of the cytosolic iron-sulfur (Fe-S) protein assembly (CIA) machinery. Transfers electrons from NADPH via its FAD and FMN prosthetic groups to the [2Fe-2S] cluster of DRE2, another key component of the CIA machinery. In turn, this reduced cluster provides electrons for assembly of cytosolic iron-sulfur cluster proteins. Positively controls H(2)O(2)-induced cell death. This is NADPH-dependent diflavin oxidoreductase 1 from Candida glabrata (strain ATCC 2001 / BCRC 20586 / JCM 3761 / NBRC 0622 / NRRL Y-65 / CBS 138) (Yeast).